A 395-amino-acid chain; its full sequence is Argininosuccinate synthase (395 aa).

ATP contacts are provided by residues 10-18 and Ala-37; that span reads AYSGGLDTS. L-citrulline contacts are provided by Tyr-88 and Ser-93. Gly-118 serves as a coordination point for ATP. Thr-120, Asn-124, and Asp-125 together coordinate L-aspartate. Asn-124 contacts L-citrulline. L-citrulline contacts are provided by Arg-128, Ser-179, Ser-188, Glu-264, and Tyr-276.

This sequence belongs to the argininosuccinate synthase family. Type 1 subfamily. As to quaternary structure, homotetramer.

The protein resides in the cytoplasm. The catalysed reaction is L-citrulline + L-aspartate + ATP = 2-(N(omega)-L-arginino)succinate + AMP + diphosphate + H(+). It functions in the pathway amino-acid biosynthesis; L-arginine biosynthesis; L-arginine from L-ornithine and carbamoyl phosphate: step 2/3. The polypeptide is Argininosuccinate synthase (Pelagibacter ubique (strain HTCC1062)).